The chain runs to 455 residues: C4-dicarboxylate transport protein (455 aa).

Transmembrane regions (helical) follow at residues 20–40 (HLYF…HFYP), 59–79 (MIIA…MGTL), 91–111 (GYFL…ANVI), 160–180 (GNIL…ILIG), 209–229 (PIGA…ASVV), 231–251 (LATL…VVLG), 344–364 (LLLV…AGFI), and 367–387 (AATL…ILGV).

This sequence belongs to the dicarboxylate/amino acid:cation symporter (DAACS) (TC 2.A.23) family.

It localises to the cell inner membrane. Its function is as follows. Responsible for the transport of dicarboxylates such as succinate, fumarate, and malate from the periplasm across the membrane. This is C4-dicarboxylate transport protein from Paracoccus denitrificans (strain Pd 1222).